The sequence spans 198 residues: Guanylate kinase (198 aa).

The Guanylate kinase-like domain maps to 8-188; it reads GRVVVLSGPS…ACSELVSLLV (181 aa). Residue 15 to 22 participates in ATP binding; sequence GPSAVGKS.

Belongs to the guanylate kinase family.

Its subcellular location is the cytoplasm. It catalyses the reaction GMP + ATP = GDP + ADP. Functionally, essential for recycling GMP and indirectly, cGMP. This Mycobacterium sp. (strain MCS) protein is Guanylate kinase.